The chain runs to 824 residues: Vesicle-fusing ATPase (824 aa).

ATP contacts are provided by residues 582–587 (RGMIVW) and 622–629 (AKTGKTSL). Position 627 (Thr-627) interacts with Mg(2+).

Belongs to the AAA ATPase family. As to quaternary structure, homohexamer. Mg(2+) is required as a cofactor.

The protein resides in the cytoplasm. The enzyme catalyses ATP + H2O = ADP + phosphate + H(+). In terms of biological role, required for vesicle-mediated transport. Catalyzes the fusion of transport vesicles within the Golgi cisternae. Is also required for transport from the endoplasmic reticulum to the Golgi stack. Seems to function as a fusion protein required for the delivery of cargo proteins to all compartments of the Golgi stack independent of vesicle origin. The protein is Vesicle-fusing ATPase (nsf-1) of Caenorhabditis elegans.